The chain runs to 166 residues: Phospholipase A2 inhibitor clone 06/08 (166 aa).

The first 19 residues, Met-1 to Gly-19, serve as a signal peptide directing secretion. In terms of domain architecture, C-type lectin spans Leu-46–Glu-161. Residues Asn-61 and Asn-122 are each glycosylated (N-linked (GlcNAc...) asparagine). Disulfide bonds link Cys-83–Cys-160 and Cys-138–Cys-152.

It belongs to the alpha-type phospholipase A2 inhibitor family. In terms of assembly, homotrimer; non-covalently linked. Expressed by the liver.

It is found in the secreted. Its function is as follows. This phospholipase A2 inhibitor binds directly phospholipase A2 in the presence or absence of calcium. The sequence is that of Phospholipase A2 inhibitor clone 06/08 from Bothrops neuwiedi (Neuwied's lancehead).